The following is a 309-amino-acid chain: Protein EXORDIUM-like 1 (309 aa).

The signal sequence occupies residues 1–23 (MASFVMGYFLLFAVAFMCLDART).

This sequence belongs to the EXORDIUM family.

It localises to the secreted. It is found in the extracellular space. The protein localises to the apoplast. Its function is as follows. May play a role in a brassinosteroid-dependent regulatory pathway that controls growth and development under low carbon and energy availability. In Arabidopsis thaliana (Mouse-ear cress), this protein is Protein EXORDIUM-like 1 (EXL1).